We begin with the raw amino-acid sequence, 24 residues long: Brevinin-1Bb (24 aa).

Cys-18 and Cys-24 form a disulfide bridge.

Expressed by the skin glands.

The protein localises to the secreted. In terms of biological role, antibacterial activity against Gram-positive bacterium S.aureus and Gram-negative bacterium E.coli. Has activity against C.albicans. The sequence is that of Brevinin-1Bb from Lithobates berlandieri (Rio Grande leopard frog).